The following is a 433-amino-acid chain: MRAEGDGGLERFCSPGKGRGLRALQPFQVGDLLFSCPAYAYVLTVNERGNHCEFCFARKEGLSKCGRCKQAFYCNVECQKEDWPMHKLECSPMVVFGENWNPSETVRLTARILAKQKIHPERTPSEKLLAVKEFESHLDKLDNEKRDLIQSDIAALHHFYSKHLEFPDSDSLVVLFAQVNCNGFTIEDEELSHLGSXIFPDVALMNHSCCPNVIVTYKGTLAEVRAVQEIHPGEEVFTSYIDLLYPTEDRNDRLRDSYFFTCECQECTTKDKDKAKVEIRKLNDPPKAEAIRDMVRYARNVIEEFRRAKHYKSPSELLEICELSQEKMSCVFEDSNVYMLHMMYQAMGVCLYMQDWEGALRYGQKIIQPYSKHYPLYSLNVASMWLKLGRLYMGLENKAAGERALRKAIAIMEVAHGKDHPYISEIKQEIESH.

An SET domain is found at 7–241 (GGLERFCSPG…PGEEVFTSYI (235 aa)). 17–19 (KGR) contacts S-adenosyl-L-methionine. Cys-52, Cys-55, Cys-65, Cys-68, Cys-74, Cys-78, His-86, and Cys-90 together coordinate Zn(2+). The MYND-type zinc finger occupies 52–90 (CEFCFARKEGLSKCGRCKQAFYCNVECQKEDWPMHKLEC). S-adenosyl-L-methionine contacts are provided by residues His-137, 206 to 207 (NH), and 258 to 260 (YFF).

The protein belongs to the class V-like SAM-binding methyltransferase superfamily. Interacts with RNA polymerase II and HELZ. Interacts with SIN3A and HDAC1. Interacts (via MYND-type zinc finger) with EPB41L3. Interacts (via SET domain) with p53/TP53. Interacts with RB1 and HSP90AA1.

The protein localises to the cytoplasm. The protein resides in the cytosol. It localises to the nucleus. The catalysed reaction is L-lysyl(4)-[histone H3] + 3 S-adenosyl-L-methionine = N(6),N(6),N(6)-trimethyl-L-lysyl(4)-[histone H3] + 3 S-adenosyl-L-homocysteine + 3 H(+). It catalyses the reaction L-lysyl-[protein] + S-adenosyl-L-methionine = N(6)-methyl-L-lysyl-[protein] + S-adenosyl-L-homocysteine + H(+). Protein-lysine N-methyltransferase that methylates both histones and non-histone proteins, including p53/TP53 and RB1. Specifically trimethylates histone H3 'Lys-4' (H3K4me3) in vivo. The activity requires interaction with HSP90alpha. Shows even higher methyltransferase activity on p53/TP53. Monomethylates 'Lys-370' of p53/TP53, leading to decreased DNA-binding activity and subsequent transcriptional regulation activity of p53/TP53. Monomethylates RB1 at 'Lys-860'. The protein is N-lysine methyltransferase SMYD2 (SMYD2) of Sus scrofa (Pig).